The following is a 278-amino-acid chain: 3-methyl-2-oxobutanoate hydroxymethyltransferase (278 aa).

Mg(2+) is bound by residues Asp44 and Asp83. Residues Asp44 to Ser45, Asp83, and Lys112 each bind 3-methyl-2-oxobutanoate. Glu114 serves as a coordination point for Mg(2+). Residue Glu181 is the Proton acceptor of the active site.

It belongs to the PanB family. As to quaternary structure, homodecamer; pentamer of dimers. The cofactor is Mg(2+).

It is found in the cytoplasm. It carries out the reaction 3-methyl-2-oxobutanoate + (6R)-5,10-methylene-5,6,7,8-tetrahydrofolate + H2O = 2-dehydropantoate + (6S)-5,6,7,8-tetrahydrofolate. Its pathway is cofactor biosynthesis; (R)-pantothenate biosynthesis; (R)-pantoate from 3-methyl-2-oxobutanoate: step 1/2. Functionally, catalyzes the reversible reaction in which hydroxymethyl group from 5,10-methylenetetrahydrofolate is transferred onto alpha-ketoisovalerate to form ketopantoate. The chain is 3-methyl-2-oxobutanoate hydroxymethyltransferase from Roseiflexus sp. (strain RS-1).